The sequence spans 300 residues: Probable phytol kinase, chloroplastic (300 aa).

The N-terminal 36 residues, 1 to 36 (MAAARPALPSSPTSLLLARSTSAPDLAARRPRRWLV), are a transit peptide targeting the chloroplast. 7 helical membrane passes run 60 to 78 (LLRDGGATLLVTAGAYSLV), 98 to 118 (VVHVLSGVFFMASWPLFSNST), 122 to 142 (FFAAVVPFLNCVRLLTYGLGF), 168 to 188 (YVIVLLIIVLVFWRDSPIGIV), 227 to 247 (FISGFLLSALMLSYFSWLGYI), 254 to 274 (ALGKLVLVALAATVVECIPVT), and 276 to 296 (VVDDNISVPLATMLVAFLLFG).

The protein belongs to the polyprenol kinase family.

The protein localises to the plastid. It localises to the chloroplast membrane. The catalysed reaction is phytol + CTP = phytyl phosphate + CDP + H(+). Its pathway is cofactor biosynthesis; tocopherol biosynthesis. Functionally, involved in the activation and reutilization of phytol from chlorophyll degradation in plant metabolism, including tocopherol biosynthesis. Catalyzes the conversion of phytol to phytol monophosphate (PMP). This chain is Probable phytol kinase, chloroplastic, found in Triticum aestivum (Wheat).